A 359-amino-acid polypeptide reads, in one-letter code: Pyruvate dehydrogenase E1 component subunit beta, mitochondrial (359 aa).

A mitochondrion-targeting transit peptide spans 1–19 (MLGVIRNKTIRPSFSAFRF). Glutamate 82 contributes to the thiamine diphosphate binding site. K(+) contacts are provided by isoleucine 135, alanine 183, isoleucine 184, and aspartate 186.

As to quaternary structure, tetramer of 2 alpha and 2 beta subunits. Thiamine diphosphate is required as a cofactor.

The protein localises to the mitochondrion matrix. It carries out the reaction N(6)-[(R)-lipoyl]-L-lysyl-[protein] + pyruvate + H(+) = N(6)-[(R)-S(8)-acetyldihydrolipoyl]-L-lysyl-[protein] + CO2. In terms of biological role, the pyruvate dehydrogenase complex catalyzes the overall conversion of pyruvate to acetyl-CoA and CO(2). It contains multiple copies of three enzymatic components: pyruvate dehydrogenase (E1), dihydrolipoamide acetyltransferase (E2) and lipoamide dehydrogenase (E3). The sequence is that of Pyruvate dehydrogenase E1 component subunit beta, mitochondrial from Pisum sativum (Garden pea).